Consider the following 492-residue polypeptide: N-succinylglutamate 5-semialdehyde dehydrogenase (492 aa).

NAD(+) is bound at residue 220 to 225; that stretch reads GSANTG. Residues Glu243 and Cys277 contribute to the active site.

The protein belongs to the aldehyde dehydrogenase family. AstD subfamily.

The enzyme catalyses N-succinyl-L-glutamate 5-semialdehyde + NAD(+) + H2O = N-succinyl-L-glutamate + NADH + 2 H(+). The protein operates within amino-acid degradation; L-arginine degradation via AST pathway; L-glutamate and succinate from L-arginine: step 4/5. In terms of biological role, catalyzes the NAD-dependent reduction of succinylglutamate semialdehyde into succinylglutamate. The sequence is that of N-succinylglutamate 5-semialdehyde dehydrogenase from Escherichia coli O157:H7.